Reading from the N-terminus, the 228-residue chain is Histidine/lysine/arginine/ornithine transport system permease protein HisQ (228 aa).

Over Met1–Gly12 the chain is Periplasmic. The chain crosses the membrane as a helical span at residues Ala13–Ile33. The region spanning Ala13–Leu212 is the ABC transmembrane type-1 domain. The Cytoplasmic segment spans residues Gly34–Gly58. The helical transmembrane segment at Val59–Val79 threads the bilayer. Residues Thr80–Gln87 are Periplasmic-facing. The helical transmembrane segment at Ile88 to Phe108 threads the bilayer. The Cytoplasmic portion of the chain corresponds to Thr109–Arg148. The helical transmembrane segment at Tyr149 to Leu171 threads the bilayer. At Gly172–Ala194 the chain is on the periplasmic side. Residues Ile195 to Leu215 traverse the membrane as a helical segment. The Cytoplasmic segment spans residues Glu216–Leu228.

It belongs to the binding-protein-dependent transport system permease family. HisMQ subfamily. As to quaternary structure, the HisPMQJ complex is composed of two ATP-binding proteins (HisP), two transmembrane proteins (HisM and HisQ) and a solute-binding protein (HisJ). The HisPMQ-ArgT complex is composed of two ATP-binding proteins (HisP), two transmembrane proteins (HisM and HisQ) and a solute-binding protein (ArgT).

It localises to the cell inner membrane. Part of the ABC transporter complex HisPMQJ involved in histidine transport. Is also part of the ABC transporter complex HisPMQ-ArgT involved in lysine/arginine/ornithine transport. Probably responsible for the translocation of the substrate across the membrane. The chain is Histidine/lysine/arginine/ornithine transport system permease protein HisQ (hisQ) from Escherichia coli (strain K12).